Here is a 417-residue protein sequence, read N- to C-terminus: Gamma-glutamyl phosphate reductase (417 aa).

The protein belongs to the gamma-glutamyl phosphate reductase family.

The protein resides in the cytoplasm. The enzyme catalyses L-glutamate 5-semialdehyde + phosphate + NADP(+) = L-glutamyl 5-phosphate + NADPH + H(+). The protein operates within amino-acid biosynthesis; L-proline biosynthesis; L-glutamate 5-semialdehyde from L-glutamate: step 2/2. Its function is as follows. Catalyzes the NADPH-dependent reduction of L-glutamate 5-phosphate into L-glutamate 5-semialdehyde and phosphate. The product spontaneously undergoes cyclization to form 1-pyrroline-5-carboxylate. The chain is Gamma-glutamyl phosphate reductase from Legionella pneumophila (strain Paris).